The primary structure comprises 399 residues: Ras-related GTP-binding protein C (399 aa).

Positions Met1 to Asp20 are disordered. Position 2 is an N-acetylserine (Ser2). A phosphoserine mark is found at Ser2 and Ser15. Positions 71, 72, 73, 74, 75, 76, 90, 94, 96, 178, 179, 181, 219, and 220 each coordinate GDP. Lys74 provides a ligand contact to GTP. Thr90 is a GTP binding site. GTP is bound at residue Thr96. A Phosphothreonine modification is found at Thr96. Residue Asp181 coordinates GTP.

Belongs to the GTR/RAG GTP-binding protein family. In terms of assembly, forms a heterodimer with RRAGA, in a sequence-independent manner, and RRAGB. Heterodimerization stabilizes proteins of the heterodimer. The GDP-bound form of RRAGC (in complex with the GTP-bound form of RRAGA or RRAGB), interacts with RPTOR, thereby promoting recruitment of mTORC1 to the lysosomes. Component of the lysosomal folliculin complex (LFC), composed of FLCN, FNIP1 (or FNIP2), RagA/RRAGA or RagB/RRAGB GDP-bound, RagC/RRAGC or RagD/RRAGD GTP-bound, and Ragulator. Interacts with NOL8. Interacts with SH3BP4; the interaction with this negative regulator is most probably direct, preferentially occurs with the inactive GDP-bound form of RRAGB, is negatively regulated by amino acids and prevents interaction with RPTOR. The Rag heterodimer interacts with SLC38A9; the probable amino acid sensor. Interacts with SESN1, SESN2 and SESN3. Interacts with PIP4P1. The Rag heterodimer interacts with the Ragulator complex. The GDP-bound form interacts with TFEB. The GDP-bound form interacts with TFE3.

Its subcellular location is the cytoplasm. It is found in the nucleus. It localises to the lysosome membrane. The catalysed reaction is GTP + H2O = GDP + phosphate + H(+). The activation of RagC/RRAGC is mediated by a GTPase activating protein (GAP). In high-amino acid conditions, activated by GTPase activating protein FLCN that stimulates RRAGC GTPase activity to turn it into its active GDP-bound form. In response to amino acid depletion, the GATOR1 complex inactivates RagC/RRAGC by securing the GTP-bound inactive form. Guanine nucleotide-binding protein that plays a crucial role in the cellular response to amino acid availability through regulation of the mTORC1 signaling cascade. Forms heterodimeric Rag complexes with RagA/RRAGA or RagB/RRAGB and cycles between an inactive GTP-bound and an active GDP-bound form: RagC/RRAGC is in its active form when GDP-bound RagC/RRAGC forms a complex with GTP-bound RagA/RRAGA (or RagB/RRAGB) and in an inactive form when GTP-bound RagC/RRAGC heterodimerizes with GDP-bound RagA/RRAGA (or RagB/RRAGB). In its GDP-bound active form, promotes the recruitment of mTORC1 to the lysosomes and its subsequent activation by the GTPase RHEB. This is a crucial step in the activation of the MTOR signaling cascade by amino acids. Also plays a central role in the non-canonical mTORC1 complex, which acts independently of RHEB and specifically mediates phosphorylation of MiT/TFE factors TFEB and TFE3: GDP-bound RagC/RRAGC mediates recruitment of MiT/TFE factors TFEB and TFE3. The polypeptide is Ras-related GTP-binding protein C (Homo sapiens (Human)).